Reading from the N-terminus, the 292-residue chain is 2-hydroxy-3-oxopropionate reductase (292 aa).

Residues 4–18 and Ser-94 each bind NAD(+); that span reads GFIGLGIMGTPMAIN. Residue Lys-169 is part of the active site. Lys-237 is a binding site for NAD(+).

Belongs to the HIBADH-related family.

The enzyme catalyses (R)-glycerate + NADP(+) = 2-hydroxy-3-oxopropanoate + NADPH + H(+). It catalyses the reaction (R)-glycerate + NAD(+) = 2-hydroxy-3-oxopropanoate + NADH + H(+). It functions in the pathway organic acid metabolism; glycolate degradation; 3-phospho-D-glycerate from glycolate: step 3/4. The polypeptide is 2-hydroxy-3-oxopropionate reductase (glxR) (Escherichia coli (strain K12)).